We begin with the raw amino-acid sequence, 352 residues long: Phospho-N-acetylmuramoyl-pentapeptide-transferase (352 aa).

The next 10 membrane-spanning stretches (helical) occupy residues 16–36 (YITF…LLFM), 66–86 (TPTM…LLCA), 88–108 (LNNL…LIGL), 129–149 (MLYL…FGME), 160–180 (PLLS…VATS), 191–211 (GLAT…VYIA), 228–248 (SGEA…FLWF), 255–275 (LFMG…MAII), 280–300 (FLLF…ILQI), and 329–349 (KIIV…LLTL).

The protein belongs to the glycosyltransferase 4 family. MraY subfamily. Requires Mg(2+) as cofactor.

Its subcellular location is the cell inner membrane. It carries out the reaction UDP-N-acetyl-alpha-D-muramoyl-L-alanyl-gamma-D-glutamyl-meso-2,6-diaminopimeloyl-D-alanyl-D-alanine + di-trans,octa-cis-undecaprenyl phosphate = di-trans,octa-cis-undecaprenyl diphospho-N-acetyl-alpha-D-muramoyl-L-alanyl-D-glutamyl-meso-2,6-diaminopimeloyl-D-alanyl-D-alanine + UMP. Its pathway is cell wall biogenesis; peptidoglycan biosynthesis. Catalyzes the initial step of the lipid cycle reactions in the biosynthesis of the cell wall peptidoglycan: transfers peptidoglycan precursor phospho-MurNAc-pentapeptide from UDP-MurNAc-pentapeptide onto the lipid carrier undecaprenyl phosphate, yielding undecaprenyl-pyrophosphoryl-MurNAc-pentapeptide, known as lipid I. The chain is Phospho-N-acetylmuramoyl-pentapeptide-transferase from Wolinella succinogenes (strain ATCC 29543 / DSM 1740 / CCUG 13145 / JCM 31913 / LMG 7466 / NCTC 11488 / FDC 602W) (Vibrio succinogenes).